The sequence spans 38 residues: Large ribosomal subunit protein bL36 (38 aa).

The protein belongs to the bacterial ribosomal protein bL36 family.

This Acinetobacter baylyi (strain ATCC 33305 / BD413 / ADP1) protein is Large ribosomal subunit protein bL36.